The following is a 143-amino-acid chain: Small ribosomal subunit protein uS12 (143 aa).

Positions 1–20 (MGKCRGLRTARKLRSHRRDQ) are enriched in basic residues. The interval 1–26 (MGKCRGLRTARKLRSHRRDQKWHDKQ) is disordered. A Glycyl lysine isopeptide (Lys-Gly) (interchain with G-Cter in SUMO2) cross-link involves residue lysine 37. The residue at position 54 (lysine 54) is an N6-succinyllysine. Proline 62 carries the 3-hydroxyproline modification. At lysine 135 the chain carries N6-acetyllysine.

It belongs to the universal ribosomal protein uS12 family. In terms of assembly, component of the 40S small ribosomal subunit. Part of the small subunit (SSU) processome, composed of more than 70 proteins and the RNA chaperone small nucleolar RNA (snoRNA) U3. Post-translationally, hydroxylation at Pro-62 affects translation termination efficiency.

It localises to the cytoplasm. It is found in the cytosol. Its subcellular location is the rough endoplasmic reticulum. The protein localises to the nucleus. The protein resides in the nucleolus. In terms of biological role, component of the ribosome, a large ribonucleoprotein complex responsible for the synthesis of proteins in the cell. The small ribosomal subunit (SSU) binds messenger RNAs (mRNAs) and translates the encoded message by selecting cognate aminoacyl-transfer RNA (tRNA) molecules. The large subunit (LSU) contains the ribosomal catalytic site termed the peptidyl transferase center (PTC), which catalyzes the formation of peptide bonds, thereby polymerizing the amino acids delivered by tRNAs into a polypeptide chain. The nascent polypeptides leave the ribosome through a tunnel in the LSU and interact with protein factors that function in enzymatic processing, targeting, and the membrane insertion of nascent chains at the exit of the ribosomal tunnel. Plays an important role in translational accuracy. Part of the small subunit (SSU) processome, first precursor of the small eukaryotic ribosomal subunit. During the assembly of the SSU processome in the nucleolus, many ribosome biogenesis factors, an RNA chaperone and ribosomal proteins associate with the nascent pre-rRNA and work in concert to generate RNA folding, modifications, rearrangements and cleavage as well as targeted degradation of pre-ribosomal RNA by the RNA exosome. The protein is Small ribosomal subunit protein uS12 (RPS23) of Bos taurus (Bovine).